Consider the following 651-residue polypeptide: Probable potassium transport system protein Kup (651 aa).

12 helical membrane-spanning segments follow: residues 30–50, 71–91, 124–144, 158–178, 190–210, 233–253, 268–288, 310–330, 358–378, 387–407, 413–433, and 437–457; these read LALAALGIVFGDIGTSVLYSL, IISMIFWSILLVVCVKYVIFV, LLLGIVGAGLFYGDSFITPAI, PDAEKIVLPASVVILTLLFIV, FGPVMATWFLTLAALGIPWII, AMAFIAMGAVVLTITGAEALY, WFGLVLPCLLINYLGQGAMIL, LVTIATMATVIASQAVISGAF, IYIPEVNWTLFIGVLALILIF, AYGLAVTGTFLLTTSLFLVLA, WPMWALIFFGVIVGGVELSIF, and LLKIASGGWIPLLFATIVVII.

Belongs to the HAK/KUP transporter (TC 2.A.72) family.

Its subcellular location is the cell membrane. It carries out the reaction K(+)(in) + H(+)(in) = K(+)(out) + H(+)(out). Its function is as follows. Transport of potassium into the cell. Likely operates as a K(+):H(+) symporter. The polypeptide is Probable potassium transport system protein Kup (Cutibacterium acnes (strain DSM 16379 / KPA171202) (Propionibacterium acnes)).